The chain runs to 115 residues: Large ribosomal subunit protein bL20 (115 aa).

It belongs to the bacterial ribosomal protein bL20 family.

Binds directly to 23S ribosomal RNA and is necessary for the in vitro assembly process of the 50S ribosomal subunit. It is not involved in the protein synthesizing functions of that subunit. This Chlorobaculum tepidum (strain ATCC 49652 / DSM 12025 / NBRC 103806 / TLS) (Chlorobium tepidum) protein is Large ribosomal subunit protein bL20.